Reading from the N-terminus, the 604-residue chain is FAD-linked oxidoreductase easE (604 aa).

A signal peptide spans 1–25 (MQFLLWSTGLVALLSWLIYTQETQS). 4 N-linked (GlcNAc...) asparagine glycosylation sites follow: Asn-47, Asn-70, Asn-106, and Asn-196. The region spanning 125–308 (QGRIPLFTVG…TRATMRVFPD (184 aa)) is the FAD-binding PCMH-type domain.

Belongs to the oxygen-dependent FAD-linked oxidoreductase family. FAD is required as a cofactor.

The protein operates within alkaloid biosynthesis; ergot alkaloid biosynthesis. Its function is as follows. FAD-linked oxidoreductase; part of the gene cluster that mediates the biosynthesis of fungal ergot alkaloid. DmaW catalyzes the first step of ergot alkaloid biosynthesis by condensing dimethylallyl diphosphate (DMAP) and tryptophan to form 4-dimethylallyl-L-tryptophan. The second step is catalyzed by the methyltransferase easF that methylates 4-dimethylallyl-L-tryptophan in the presence of S-adenosyl-L-methionine, resulting in the formation of 4-dimethylallyl-L-abrine. The catalase easC and the FAD-dependent oxidoreductase easE then transform 4-dimethylallyl-L-abrine to chanoclavine-I which is further oxidized by easD in the presence of NAD(+), resulting in the formation of chanoclavine-I aldehyde. Chanoclavine-I aldehyde is the precursor of ergoamides and ergopeptines in Clavicipitaceae, and clavine-type alcaloids such as fumiclavine in Trichocomaceae. However, the metabolites downstream of chanoclavine-I aldehyde in Arthrodermataceae have not been identified yet. The sequence is that of FAD-linked oxidoreductase easE from Trichophyton verrucosum (strain HKI 0517).